The chain runs to 131 residues: D-ribose pyranase (131 aa).

The Proton donor role is filled by His20. Residues Asp28, His98, and 120–122 contribute to the substrate site; that span reads YAN.

Belongs to the RbsD / FucU family. RbsD subfamily. Homodecamer.

It localises to the cytoplasm. The enzyme catalyses beta-D-ribopyranose = beta-D-ribofuranose. Its pathway is carbohydrate metabolism; D-ribose degradation; D-ribose 5-phosphate from beta-D-ribopyranose: step 1/2. Catalyzes the interconversion of beta-pyran and beta-furan forms of D-ribose. This chain is D-ribose pyranase, found in Bacillus cereus (strain B4264).